We begin with the raw amino-acid sequence, 219 residues long: 7-cyano-7-deazaguanine synthase (219 aa).

10–20 (FSGGQDSTTCL) lines the ATP pocket. Zn(2+) is bound by residues cysteine 188, cysteine 197, cysteine 200, and cysteine 203.

This sequence belongs to the QueC family. In terms of assembly, homodimer. It depends on Zn(2+) as a cofactor.

It carries out the reaction 7-carboxy-7-deazaguanine + NH4(+) + ATP = 7-cyano-7-deazaguanine + ADP + phosphate + H2O + H(+). Its pathway is purine metabolism; 7-cyano-7-deazaguanine biosynthesis. In terms of biological role, catalyzes the ATP-dependent conversion of 7-carboxy-7-deazaguanine (CDG) to 7-cyano-7-deazaguanine (preQ(0)). This chain is 7-cyano-7-deazaguanine synthase, found in Clostridium botulinum (strain Langeland / NCTC 10281 / Type F).